Reading from the N-terminus, the 535-residue chain is Probable inorganic phosphate transporter 1-7 (535 aa).

Residues 1 to 24 are Cytoplasmic-facing; sequence MAGDQLNVLNALDVAKTQWYHFTA. Residues 25-45 form a helical membrane-spanning segment; that stretch reads IIIAGMGFFTDAYDLFCISLV. Residues 46 to 70 lie on the Extracellular side of the membrane; the sequence is TKLLGRIYYHVDGSEKPGTLPPNVS. The helical transmembrane segment at 71-91 threads the bilayer; sequence AAVNGVAFCGTLAGQLFFGWL. The Cytoplasmic segment spans residues 92–99; the sequence is GDKLGRKK. Residues 100-120 traverse the membrane as a helical segment; that stretch reads VYGMTLMVMVLCSIASGLSFG. Residues 121-131 lie on the Extracellular side of the membrane; it reads SNPKTVMTTLC. A helical transmembrane segment spans residues 132–152; sequence FFRFWLGFGIGGDYPLSATIM. At 153-161 the chain is on the cytoplasmic side; that stretch reads SEYANKKTR. The helical transmembrane segment at 162 to 182 threads the bilayer; that stretch reads GAFIAAVFAMQGFGILTGGIF. The Extracellular segment spans residues 183–211; sequence AIIVSAAFEAKFPAPTYQIDALASTVPQA. A helical membrane pass occupies residues 212–232; sequence DYVWRIILMVGALPAAMTYYS. Residues 233 to 289 are Cytoplasmic-facing; it reads RSKMPETARYTALVAKDAKLAASNMSKVLQVEIEAEQQGTEDKSNSFGLFSKEFMKR. A helical transmembrane segment spans residues 290-310; the sequence is HGLHLLGTTSTWFLLDIAFYS. Residues 311 to 345 lie on the Extracellular side of the membrane; the sequence is QNLFQKDIFSAIGWIPPAQTMNAIQEVFKIARAQT. The chain crosses the membrane as a helical span at residues 346-366; that stretch reads LIALCSTVPGYWFTVAFIDVI. Over 367–368 the chain is Cytoplasmic; the sequence is GR. A helical transmembrane segment spans residues 369–389; sequence FAIQMMGFFFMTVFMFALAIP. The Extracellular segment spans residues 390-399; that stretch reads YDHWTHKENR. A helical transmembrane segment spans residues 400-420; that stretch reads IGFVAMYSLTFFFANFGPNAT. Residues 421–438 are Cytoplasmic-facing; sequence TFVVPAEIFPARFRSTCH. A helical membrane pass occupies residues 439 to 459; the sequence is GISAASGKLGAMVGAFGFLYL. The Extracellular portion of the chain corresponds to 460–480; it reads AQSPDKTKTEHGYPPGIGVKN. A helical membrane pass occupies residues 481 to 501; that stretch reads SLIVLGVVNLLGMVFTLLVPE. At 502–535 the chain is on the cytoplasmic side; the sequence is SKGKSLEEMSGENEQNDESSSSSNNNSNNAVSTA. A disordered region spans residues 506 to 535; that stretch reads SLEEMSGENEQNDESSSSSNNNSNNAVSTA. Over residues 519 to 535 the composition is skewed to low complexity; sequence ESSSSSNNNSNNAVSTA. The residue at position 520 (S520) is a Phosphoserine.

This sequence belongs to the major facilitator superfamily. Phosphate:H(+) symporter (TC 2.A.1.9) family. As to expression, mature pollen.

It localises to the membrane. In terms of biological role, high-affinity transporter for external inorganic phosphate. The protein is Probable inorganic phosphate transporter 1-7 (PHT1-7) of Arabidopsis thaliana (Mouse-ear cress).